The primary structure comprises 206 residues: Thymidylate kinase (206 aa).

11–18 is a binding site for ATP; sequence GIDGAGKT.

This sequence belongs to the thymidylate kinase family.

It carries out the reaction dTMP + ATP = dTDP + ADP. Functionally, phosphorylation of dTMP to form dTDP in both de novo and salvage pathways of dTTP synthesis. In Burkholderia cenocepacia (strain HI2424), this protein is Thymidylate kinase.